Reading from the N-terminus, the 130-residue chain is 3-hydroxyisobutyrate dehydrogenase, mitochondrial (130 aa).

Residues 1-17, 25-26, and N30 each bind NAD(+); these read TPVG…PMAK and LP. N6-acetyllysine is present on K43. An N6-acetyllysine; alternate modification is found at K47. K47 is subject to N6-succinyllysine; alternate. K101 bears the N6-succinyllysine mark.

It belongs to the HIBADH-related family. 3-hydroxyisobutyrate dehydrogenase subfamily. Homodimer.

The protein resides in the mitochondrion. It carries out the reaction 3-hydroxy-2-methylpropanoate + NAD(+) = 2-methyl-3-oxopropanoate + NADH + H(+). The protein operates within amino-acid degradation; L-valine degradation. This is 3-hydroxyisobutyrate dehydrogenase, mitochondrial from Mesocricetus auratus (Golden hamster).